Here is a 905-residue protein sequence, read N- to C-terminus: Lateral signaling target protein 2 homolog (905 aa).

A Glycyl lysine isopeptide (Lys-Gly) (interchain with G-Cter in ubiquitin) cross-link involves residue Lys-87. Ser-334 is subject to Phosphoserine. The interval 354–441 (DEMSSLLSPP…RGQDGQSGEV (88 aa)) is disordered. 2 stretches are compositionally biased toward polar residues: residues 358-367 (SLLSPPSACQ) and 418-437 (PGNTFELTQGNAQQRGQDGQ). Thr-512 carries the phosphothreonine modification. Disordered regions lie at residues 516 to 552 (NPKSPTSQDSAVAAQEAPGHGTSPLEPRAEGTGDNSH) and 589 to 691 (PGSV…RGDV). Basic and acidic residues-rich tracts occupy residues 542-552 (PRAEGTGDNSH) and 605-615 (GGDKEPERIDE). Residues 647-656 (SGPQVDTASR) are compositionally biased toward polar residues. Positions 659 to 678 (GEGEVKGQPEPEARKQDPEK) are enriched in basic and acidic residues. The FYVE-type zinc finger occupies 835–895 (DEACGFCTSC…VCTHCYMFHV (61 aa)). Zn(2+)-binding residues include Cys-841, Cys-844, Cys-857, Cys-860, Cys-865, Cys-868, and Cys-887. Thr-888 carries the phosphothreonine; by MAP2K modification. Cys-890 is a binding site for Zn(2+).

This sequence belongs to the lst-2 family. Interacts with TRIM3. Post-translationally, monoubiquitination at Lys-87 prevents binding to phosphatidylinositol 3-phosphate (PI3P) and localization to early endosome membranes. As to expression, enriched in brain (at protein level).

Its subcellular location is the cytoplasm. The protein localises to the cytosol. The protein resides in the early endosome membrane. Negative regulator of epidermal growth factor receptor (EGFR) signaling. Acts by promoting EGFR degradation in endosomes when not monoubiquitinated. This chain is Lateral signaling target protein 2 homolog (Zfyve28), found in Mus musculus (Mouse).